Reading from the N-terminus, the 1294-residue chain is Voltage-gated inwardly rectifying potassium channel KCNH2 (1294 aa).

At 1 to 377 (RKFIIANARV…RIHRWTILHY (377 aa)) the chain is on the cytoplasmic side. The PAS domain maps to 15 to 44 (VIYCNDGFCELCGYSRAEVMQRPCTCDFLH). Residues 66-118 (RKVEIAFYRKDGSCFLCLVDVVPVKNEDGAVIMFILNFEVVMEKDMVGSPARD) form the PAC domain. The interval 207–258 (LVAPGSPPSSVPGPPHTSPRAHSLNPDASGSSCSLARTRSRESCASVRRASS) is disordered. Positions 211–223 (GSPPSSVPGPPHT) are enriched in pro residues. Serine 212 and serine 216 each carry phosphoserine. Residues 232–243 (PDASGSSCSLAR) show a composition bias toward polar residues. A phosphoserine mark is found at serine 257, serine 258, serine 294, and serine 325. Residues 378–398 (SPFKAVWDWLILLLVIYTAVF) traverse the membrane as a helical segment. The Extracellular portion of the chain corresponds to 399 to 424 (TPYSAAFLLKEPEEDAQTADCGYACQ). The chain crosses the membrane as a helical span at residues 425–445 (PLAVVDLIVDIMFIVDILINF). Residues 446-469 (RTTYVNANEEVVSHPGRIAVHYFK) are Cytoplasmic-facing. A helical membrane pass occupies residues 470–490 (GWFLIDMVAAIPFDLLIFGSG). The Extracellular portion of the chain corresponds to 491-494 (SEEL). The helical; Voltage-sensor transmembrane segment at 495 to 515 (IGLLKTARLLRLVRVARKLDR) threads the bilayer. The Cytoplasmic segment spans residues 516 to 521 (YSEYGA). A helical transmembrane segment spans residues 522–542 (AVLFLLMCTFALIAHWLACIW). Residues 543 to 585 (YAIGNMEQPDMNSRIGWLHNLGDQIGKPYNSSGLGGPSIKDKY) lie on the Extracellular side of the membrane. Residues 586 to 606 (VTALYFTFSSLTSVGFGNVSP) constitute an intramembrane region (pore-forming). The Selectivity filter motif lies at 598–603 (SVGFGN). Residues 607–612 (NTNSEK) lie on the Extracellular side of the membrane. The helical transmembrane segment at 613 to 633 (IFSICVMLIGSLMYASIFGNV) threads the bilayer. The Cytoplasmic portion of the chain corresponds to 634–1294 (SAIIQRLYSG…IAHWLACIWY (661 aa)). A cNMP-binding domain region spans residues 716–816 (PFRGATKGCL…IHRDDLLEVL (101 aa)). A disordered region spans residues 844-956 (GSPGSTELEG…LTEDGDKSDT (113 aa)). Serine 845 and serine 848 each carry phosphoserine. Over residues 857–866 (RQRRRKLSFR) the composition is skewed to basic residues. Positions 902–913 (GDSPSSGPSSPE) are enriched in low complexity. Arginine 987 is subject to Omega-N-methylarginine. Residues 1008–1035 (RGDVESRLDALQRQLNRLETRLSADMAT) adopt a coiled-coil conformation. A Phosphoserine modification is found at serine 1110.

The protein belongs to the potassium channel family. H (Eag) (TC 1.A.1.20) subfamily. Kv11.1/KCNH2 sub-subfamily. In terms of assembly, the potassium channel is probably composed of a homo- or heterotetrameric complex of pore-forming alpha subunits that can associate with modulating beta subunits. Interacts with DNAJB12 and DNAJB14; chaperones DNAJB12 and DNAJB14 promote tetramerization. Heteromultimer with KCNH6/ERG2 and KCNH7/ERG3. Interacts with ALG10B. Forms a stable complex with KCNE1 or KCNE2, and that this heteromultimerization regulates Inward rectifier potassium channel activity. Interacts with CANX. The core-glycosylated, but not the fully glycosylated form interacts with RNF207. Interacts with NDFIP1 and NDFIP2; this interaction decreases the cell membrane expression by targeting KCNH2, through interaction with NEDD4L, for the degradation through the multivesicular bodies (MVBs)-lysosomal pathway. Post-translationally, phosphorylated on serine and threonine residues. Phosphorylation by PKA inhibits ion conduction. In terms of tissue distribution, highly expressed in heart and brain.

The protein localises to the cell membrane. It catalyses the reaction K(+)(in) = K(+)(out). Pore-forming (alpha) subunit of voltage-gated inwardly rectifying potassium channel. Characterized by unusual gating kinetics by producing relatively small outward currents during membrane depolarization and large inward currents during subsequent repolarization which reflect a rapid inactivation during depolarization and quick recovery from inactivation but slow deactivation (closing) during repolarization. Channel properties are modulated by cAMP and subunit assembly. Forms a stable complex with KCNE1 or KCNE2, and that this heteromultimerization regulates inward rectifier potassium channel activity. The sequence is that of Voltage-gated inwardly rectifying potassium channel KCNH2 from Cavia porcellus (Guinea pig).